We begin with the raw amino-acid sequence, 596 residues long: Jacalin-related lectin 46 (596 aa).

Residues 1–20 (MTERSEALGKDGNRRWDDKS) form a disordered region. 4 Jacalin-type lectin domains span residues 2-143 (TERS…YFTR), 146-291 (PTRI…YFTP), 294-439 (PTKS…HFYP), and 446-592 (AEKL…HVLP).

The protein belongs to the jacalin lectin family.

The polypeptide is Jacalin-related lectin 46 (JAL46) (Arabidopsis thaliana (Mouse-ear cress)).